Reading from the N-terminus, the 812-residue chain is Ras guanine nucleotide exchange factor J (812 aa).

Low complexity-rich tracts occupy residues 1–36 and 53–65; these read MSNPVSINNSGSISNSNLNNESLSPSRLSSSPNSKS and LLNRSSSGNNLNN. The interval 1-146 is disordered; that stretch reads MSNPVSINNS…GGSSGGLNMS (146 aa). Residues 75 to 86 show a composition bias toward polar residues; sequence SFTSNYQNIYTP. A compositionally biased stretch (low complexity) spans 87–101; it reads NNNSYNSSNNNNNNN. The span at 131–141 shows a compositional bias: gly residues; that stretch reads NSGGGGGGSSG. Residues 214-246 enclose the LisH domain; it reads GRDTMLQLILQHLQFEGLMDSRKLLEEEARVQY. The interval 320–382 is disordered; the sequence is IIYVDDKEKE…NNSIGNSNSY (63 aa). The segment covering 323 to 343 has biased composition (basic and acidic residues); the sequence is VDDKEKEKEKEKEKEKEKDKF. Low complexity predominate over residues 344-382; sequence GPNSTNSLSGSGSSPNIPSGMNNNSSSIGNNSIGNSNSY. Residues 409–535 enclose the N-terminal Ras-GEF domain; sequence NKPQVKAASL…LSESLNAKIK (127 aa). The Ras-GEF domain occupies 573 to 804; it reads DEEEIARQLT…YSRSMSFEPR (232 aa).

Functionally, promotes the exchange of Ras-bound GDP by GTP. The polypeptide is Ras guanine nucleotide exchange factor J (gefJ) (Dictyostelium discoideum (Social amoeba)).